The primary structure comprises 60 residues: Large ribosomal subunit protein uL30 (60 aa).

It belongs to the universal ribosomal protein uL30 family. In terms of assembly, part of the 50S ribosomal subunit.

This is Large ribosomal subunit protein uL30 from Polaromonas sp. (strain JS666 / ATCC BAA-500).